A 132-amino-acid polypeptide reads, in one-letter code: Matrix protein (132 aa).

The protein localises to the virion membrane. Envelope protein that may play a role in host-cell attachment and viral genome entry. This is Matrix protein from Halorubrum pleomorphic virus 1 (HRPV-1).